The following is a 626-amino-acid chain: 4-hydroxy-3-methylbut-2-en-1-yl diphosphate synthase (flavodoxin) (626 aa).

The [4Fe-4S] cluster site is built by Cys521, Cys524, Cys555, and Glu562.

Belongs to the IspG family. The cofactor is [4Fe-4S] cluster.

The enzyme catalyses (2E)-4-hydroxy-3-methylbut-2-enyl diphosphate + oxidized [flavodoxin] + H2O + 2 H(+) = 2-C-methyl-D-erythritol 2,4-cyclic diphosphate + reduced [flavodoxin]. Its pathway is isoprenoid biosynthesis; isopentenyl diphosphate biosynthesis via DXP pathway; isopentenyl diphosphate from 1-deoxy-D-xylulose 5-phosphate: step 5/6. In terms of biological role, converts 2C-methyl-D-erythritol 2,4-cyclodiphosphate (ME-2,4cPP) into 1-hydroxy-2-methyl-2-(E)-butenyl 4-diphosphate. The sequence is that of 4-hydroxy-3-methylbut-2-en-1-yl diphosphate synthase (flavodoxin) from Bacteroides fragilis (strain YCH46).